Here is a 407-residue protein sequence, read N- to C-terminus: Putative serine/threonine-protein kinase C01C4.3 (407 aa).

Positions 33–57 are enriched in polar residues; the sequence is NQLQNHPPRNATQSPQRQPRTSESS. Residues 33-68 are disordered; it reads NQLQNHPPRNATQSPQRQPRTSESSMDFPRSALRRN. Residues 126–397 form the Protein kinase domain; it reads YTVNKQLGTG…RKCLAKEKLL (272 aa). Residues 132–140 and lysine 155 contribute to the ATP site; that span reads LGTGRFGFI. Asparagine 251 serves as the catalytic Proton acceptor.

Belongs to the protein kinase superfamily. Ser/Thr protein kinase family.

The enzyme catalyses L-seryl-[protein] + ATP = O-phospho-L-seryl-[protein] + ADP + H(+). It carries out the reaction L-threonyl-[protein] + ATP = O-phospho-L-threonyl-[protein] + ADP + H(+). In Caenorhabditis elegans, this protein is Putative serine/threonine-protein kinase C01C4.3.